A 57-amino-acid polypeptide reads, in one-letter code: DNA-directed RNA polymerase subunit Rpo6 (57 aa).

It belongs to the archaeal Rpo6/eukaryotic RPB6 RNA polymerase subunit family. As to quaternary structure, part of the RNA polymerase complex.

Its subcellular location is the cytoplasm. It localises to the chromosome. It carries out the reaction RNA(n) + a ribonucleoside 5'-triphosphate = RNA(n+1) + diphosphate. Its function is as follows. DNA-dependent RNA polymerase (RNAP) catalyzes the transcription of DNA into RNA using the four ribonucleoside triphosphates as substrates. The polypeptide is DNA-directed RNA polymerase subunit Rpo6 (Thermococcus kodakarensis (strain ATCC BAA-918 / JCM 12380 / KOD1) (Pyrococcus kodakaraensis (strain KOD1))).